The sequence spans 308 residues: Olfactory receptor 2D2 (308 aa).

The Extracellular portion of the chain corresponds to 1–25 (MRQINQTQVTEFLLLGLSDGPHTEQ). N5 is a glycosylation site (N-linked (GlcNAc...) asparagine). A helical transmembrane segment spans residues 26–49 (LLFIVLLGVYLVTVLGNLLLISLV). Topologically, residues 50 to 57 (HVDSQLHT) are cytoplasmic. A helical membrane pass occupies residues 58 to 79 (PMYFFLCNLSLADLCFSTNIVP). Residues 80 to 100 (QALVHLLSRKKVIAFTLCAAR) lie on the Extracellular side of the membrane. The helical transmembrane segment at 101–120 (LLFFLIFGCTQCALLAVMSY) threads the bilayer. Residues 121 to 139 (DRYVAICNPLRYPNIMTWK) lie on the Cytoplasmic side of the membrane. The chain crosses the membrane as a helical span at residues 140-158 (VCVQLATGSWTSGILVSVV). Residues 159–195 (DTTFILRLPYRGSNSIAHFFCEAPALLILASTDTHAS) are Extracellular-facing. A helical transmembrane segment spans residues 196-219 (EMAIFLMGVVILLIPVFLILVSYG). At 220–236 (RIIVTVVKMKSTVGSLK) the chain is on the cytoplasmic side. The helical transmembrane segment at 237–259 (AFSTCGSHLMVVILFYGSAIITY) threads the bilayer. The Extracellular portion of the chain corresponds to 260–270 (MTPKSSKQQEK). Residues 271-290 (SVSVFYAIVTPMLNPLIYSL) form a helical membrane-spanning segment. Over 291–308 (RNKDVKAALRKVATRNFP) the chain is Cytoplasmic.

Belongs to the G-protein coupled receptor 1 family.

It localises to the cell membrane. In terms of biological role, odorant receptor. This Homo sapiens (Human) protein is Olfactory receptor 2D2 (OR2D2).